Here is a 507-residue protein sequence, read N- to C-terminus: Extracellular elastase (507 aa).

Positions 1 to 28 (MKNFSKFALTSIAALTVASPLVNTEVDA) are cleaved as a signal peptide. Residues 29–207 (KDKVSATQNI…VVDKLNMIKE (179 aa)) constitute a propeptide that is removed on maturation. D347 serves as a coordination point for Ca(2+). H351 is a Zn(2+) binding site. E352 is a catalytic residue. 2 residues coordinate Zn(2+): H355 and E375. Residues D386, E388, D389, L391, E394, Y397, T398, V401, and D404 each coordinate Ca(2+). H435 (proton donor) is an active-site residue.

Belongs to the peptidase M4 family. The cofactor is Ca(2+). Requires Zn(2+) as cofactor.

It is found in the secreted. Functionally, protease that has a low substrate specificity. Glucagon is preferentially cleaved between aromatic (Phe) and hydrophobic (Val) amino acids. Hydrolyzes casein and elastin. In Staphylococcus epidermidis, this protein is Extracellular elastase (sepA).